The primary structure comprises 274 residues: Large ribosomal subunit protein uL2 (274 aa).

The interval 200–274 (HALEKSGKAG…SKYIIERRKK (75 aa)) is disordered. 2 stretches are compositionally biased toward basic residues: residues 207–220 (KAGRSRWLGRRPRN) and 255–274 (LKTRAPKKHSSKYIIERRKK).

The protein belongs to the universal ribosomal protein uL2 family. Part of the 50S ribosomal subunit. Forms a bridge to the 30S subunit in the 70S ribosome.

Its function is as follows. One of the primary rRNA binding proteins. Required for association of the 30S and 50S subunits to form the 70S ribosome, for tRNA binding and peptide bond formation. It has been suggested to have peptidyltransferase activity; this is somewhat controversial. Makes several contacts with the 16S rRNA in the 70S ribosome. The protein is Large ribosomal subunit protein uL2 of Parabacteroides distasonis (strain ATCC 8503 / DSM 20701 / CIP 104284 / JCM 5825 / NCTC 11152).